The primary structure comprises 272 residues: HMP-PP phosphatase (272 aa).

The active-site Nucleophile is Asp-8. 3 residues coordinate Mg(2+): Asp-8, Asp-10, and Asp-212.

The protein belongs to the HAD-like hydrolase superfamily. Cof family. Mg(2+) serves as cofactor.

The catalysed reaction is 4-amino-2-methyl-5-(diphosphooxymethyl)pyrimidine + H2O = 4-amino-2-methyl-5-(phosphooxymethyl)pyrimidine + phosphate + H(+). In terms of biological role, catalyzes the hydrolysis of 4-amino-2-methyl-5-hydroxymethylpyrimidine pyrophosphate (HMP-PP) to 4-amino-2-methyl-5-hydroxymethylpyrimidine phosphate (HMP-P). This chain is HMP-PP phosphatase, found in Salmonella typhi.